A 91-amino-acid polypeptide reads, in one-letter code: Early E3B 10.4 kDa protein (91 aa).

Residues 1–21 form the signal peptide; sequence MVTVLLIFLCLPVIFSSSTFA. Residues 22-33 are Lumenal-facing; sequence AVSDLDPECLAP. A helical membrane pass occupies residues 34–56; it reads FAVYLIFTFVTATCVCSIITLLI. Residues 57–91 lie on the Cytoplasmic side of the membrane; sequence TSLQFFDYYYVRIVYRRHHPRYQNPQIAALLQLQP.

It belongs to the adenoviridae E3B family.

The protein localises to the host endoplasmic reticulum membrane. In terms of biological role, down-regulates the EGF receptor. This chain is Early E3B 10.4 kDa protein, found in Homo sapiens (Human).